Here is a 211-residue protein sequence, read N- to C-terminus: Holliday junction branch migration complex subunit RuvA (211 aa).

The domain I stretch occupies residues 1-64; that stretch reads MIGRLRGMLV…EDAQLLYGFA (64 aa). Positions 65 to 143 are domain II; it reads NKVERKLFRL…DWQAQQIHLV (79 aa). Residues 144–162 are flexible linker; it reads SDDGVIPEQLSAELSQETT. Positions 163–211 are domain III; sequence FVNDNKGDAINALLSLGYKQVQADKAVKSVYNRGMSSENIIRDALKSMI.

Belongs to the RuvA family. Homotetramer. Forms an RuvA(8)-RuvB(12)-Holliday junction (HJ) complex. HJ DNA is sandwiched between 2 RuvA tetramers; dsDNA enters through RuvA and exits via RuvB. An RuvB hexamer assembles on each DNA strand where it exits the tetramer. Each RuvB hexamer is contacted by two RuvA subunits (via domain III) on 2 adjacent RuvB subunits; this complex drives branch migration. In the full resolvosome a probable DNA-RuvA(4)-RuvB(12)-RuvC(2) complex forms which resolves the HJ.

The protein localises to the cytoplasm. Functionally, the RuvA-RuvB-RuvC complex processes Holliday junction (HJ) DNA during genetic recombination and DNA repair, while the RuvA-RuvB complex plays an important role in the rescue of blocked DNA replication forks via replication fork reversal (RFR). RuvA specifically binds to HJ cruciform DNA, conferring on it an open structure. The RuvB hexamer acts as an ATP-dependent pump, pulling dsDNA into and through the RuvAB complex. HJ branch migration allows RuvC to scan DNA until it finds its consensus sequence, where it cleaves and resolves the cruciform DNA. This Colwellia psychrerythraea (strain 34H / ATCC BAA-681) (Vibrio psychroerythus) protein is Holliday junction branch migration complex subunit RuvA.